A 266-amino-acid polypeptide reads, in one-letter code: Undecaprenyl-diphosphatase (266 aa).

8 helical membrane-spanning segments follow: residues 4 to 24 (ILRV…PISS), 39 to 59 (LPIV…IIYY), 88 to 108 (LNLI…GIFI), 114 to 134 (LFTF…LFLI), 147 to 167 (IFFS…PGIS), 186 to 206 (SLEI…FLKY), 214 to 234 (IIFN…FGLF), and 246 to 266 (SKLY…YFLV).

Belongs to the UppP family.

The protein resides in the cell inner membrane. The catalysed reaction is di-trans,octa-cis-undecaprenyl diphosphate + H2O = di-trans,octa-cis-undecaprenyl phosphate + phosphate + H(+). Its function is as follows. Catalyzes the dephosphorylation of undecaprenyl diphosphate (UPP). Confers resistance to bacitracin. This chain is Undecaprenyl-diphosphatase, found in Borrelia recurrentis (strain A1).